The following is a 350-amino-acid chain: MVPMTIKVAVAGASGYAGGEILRLLLGHPAYASGELEIGALTAASTVGSTVAELMPHLPQLADRVIEDTTKEVLAGHDVVFLGLPHGFSAEIANQLGPEVTVIDCAADFRLTNADDWSKFYGSEHAGSWPYGIPEMPGHREQLKGATRVAVPGCFPTGATLALLPAVQADLIEPDISVVSITGVSGAGKKASVPLLGSETMGSLKAYNTSGKHRHTPELTQNLKEVTDKDVTISFTPVLAPLPRGILTTATAPLIDGVTQEQARKVYEDFYVDEPFVLVLPEGVQPQTQNVVGSNMCHVQIEVDTVARKVLVTSAIDNLTKGTGGAAVQCMNLALGFEETAGLPRTGVAP.

Residue Cys154 is part of the active site.

The protein belongs to the NAGSA dehydrogenase family. Type 1 subfamily.

It localises to the cytoplasm. It carries out the reaction N-acetyl-L-glutamate 5-semialdehyde + phosphate + NADP(+) = N-acetyl-L-glutamyl 5-phosphate + NADPH + H(+). It functions in the pathway amino-acid biosynthesis; L-arginine biosynthesis; N(2)-acetyl-L-ornithine from L-glutamate: step 3/4. Its function is as follows. Catalyzes the NADPH-dependent reduction of N-acetyl-5-glutamyl phosphate to yield N-acetyl-L-glutamate 5-semialdehyde. The chain is N-acetyl-gamma-glutamyl-phosphate reductase from Corynebacterium efficiens (strain DSM 44549 / YS-314 / AJ 12310 / JCM 11189 / NBRC 100395).